The sequence spans 246 residues: MAGHSKWANIQHRKGRQDKLRAKLFSKLSKEITVAAKMGDPDPDKNPRLRLAVKEAKSQSVPKDVIERAIKKSLGGEGENYDEIRYEGYGPGGVAVIVEAMTDNRNRTASTVRSTFSKNGGNLGETGSVSFMFERKGQVSYPAEAGDADTVMMAAIEAGAEDVESDESGHIIWCADTDLNEVSTALEAELGESESTKLVWRPTTTTELDLEGMQKLMKLLDALEDDDDVQNVTANFEASDEVMAQL.

The protein belongs to the TACO1 family.

The protein localises to the cytoplasm. In Dinoroseobacter shibae (strain DSM 16493 / NCIMB 14021 / DFL 12), this protein is Probable transcriptional regulatory protein Dshi_2762.